We begin with the raw amino-acid sequence, 697 residues long: Protein arginine N-methyltransferase 7 (697 aa).

SAM-dependent MTase PRMT-type domains are found at residues 14 to 357 (QNTW…YSLW) and 366 to 697 (EQPA…EETK).

The protein belongs to the class I-like SAM-binding methyltransferase superfamily. Protein arginine N-methyltransferase family. PRMT7 subfamily.

Functionally, essential arginine methyltransferase that can both catalyze the formation of omega-N monomethylarginine (MMA) and symmetrical dimethylarginine (sDMA). Specifically mediates the symmetrical dimethylation of arginine residues in the small nuclear ribonucleoproteins SmD1 and SmD3. The protein is Protein arginine N-methyltransferase 7 (Art7) of Drosophila virilis (Fruit fly).